A 243-amino-acid chain; its full sequence is MRLRNQLQSVYKMDPLRNEEEVRVKIKDLNEHIVCCLCAGYFVDATTITECLHTFCKSCIVKYLQTSKYCPMCNIKIHETQPLLNLKLDRVMQDIVYKLVPGLQDSEEKRIRDFYQSRGLDRVSQPSGEEPALRGLGLPFTSFDHYYRYDEQLSLCLERLSSGKDKNKNVLQNKYVRCSVRAEVRHLRRVLCHRLMLNPQHVQLLFDNEVLPDHMTMKQLWLSRWFGKPSPLLLQYSVKEKRR.

K12 participates in a covalent cross-link: Glycyl lysine isopeptide (Lys-Gly) (interchain with G-Cter in SUMO2). Residues 35 to 74 (CCLCAGYFVDATTITECLHTFCKSCIVKYLQTSKYCPMCN) form an RING-type zinc finger. Positions 74-231 (NIKIHETQPL…LSRWFGKPSP (158 aa)) are necessary for repressor activity. K76 participates in a covalent cross-link: Glycyl lysine isopeptide (Lys-Gly) (interchain with G-Cter in SUMO2). The required for the interaction with the KDM2B-SKP1 heterodimeric complex stretch occupies residues 138–239 (LPFTSFDHYY…SPLLLQYSVK (102 aa)). Residues 151-239 (EQLSLCLERL…SPLLLQYSVK (89 aa)) form an RING-finger and WD40-associated ubiquitin-like domain (RAWUL); sufficient for interaction with BCOR and BCORL1 region.

Interacts with BCORL1, forming heterodimers. The PCGF1-BCORL1 heterodimeric complex interacts with the KDM2B-SKP1 heterodimeric complex to form a homotetrameric polycomb repression complex 1 (PRC1.1). Component of the repressive BCOR complex containing a Polycomb group subcomplex at least composed of RYBP, RING1 and RNF2/RING2. Specifically interacts with BCOR, RING1 and RNF2/RING2. Component of a PRC1-like complex. Interacts with CBX6, CBX7 and CBX8. Interacts with DPPA4, NANOG, POU5F1 and RYBP. In terms of tissue distribution, highly expressed in brain, cerebellum, heart and testis.

The protein localises to the nucleus. Component of the Polycomb group (PcG) multiprotein BCOR complex, a complex required to maintain the transcriptionally repressive state of some genes, such as BCL6 and the cyclin-dependent kinase inhibitor, CDKN1A. Transcriptional repressor that may be targeted to the DNA by BCL6; this transcription repressor activity may be related to PKC signaling pathway. Represses CDKN1A expression by binding to its promoter, and this repression is dependent on the retinoic acid response element (RARE element). Promotes cell cycle progression and enhances cell proliferation as well. May have a positive role in tumor cell growth by down-regulating CDKN1A. Component of a Polycomb group (PcG) multiprotein PRC1-like complex, a complex class required to maintain the transcriptionally repressive state of many genes, including Hox genes, throughout development. PcG PRC1 complex acts via chromatin remodeling and modification of histones; it mediates monoubiquitination of histone H2A 'Lys-119', rendering chromatin heritably changed in its expressibility. Within the PRC1-like complex, regulates RNF2 ubiquitin ligase activity. Regulates the expression of DPPA4 and NANOG in the NT2 embryonic carcinoma cells. In Rattus norvegicus (Rat), this protein is Polycomb group RING finger protein 1 (Pcgf1).